The sequence spans 305 residues: Ribonuclease BN (305 aa).

Positions 64, 66, 68, 69, 141, 212, and 270 each coordinate Zn(2+). The Proton acceptor role is filled by D68.

This sequence belongs to the RNase Z family. RNase BN subfamily. Homodimer. It depends on Zn(2+) as a cofactor.

Functionally, zinc phosphodiesterase, which has both exoribonuclease and endoribonuclease activities. The protein is Ribonuclease BN of Escherichia coli O6:K15:H31 (strain 536 / UPEC).